A 240-amino-acid chain; its full sequence is MADS-box transcription factor 27 (240 aa).

The 61-residue stretch at 1 to 61 (MGRGKIVIRR…GRLYEYSSTS (61 aa)) folds into the MADS-box domain. A K-box domain is found at 86–176 (LKFWQREAAS…YKKISLIRQE (91 aa)). Over residues 220–231 (LPQHSDAEQSTA) the composition is skewed to polar residues. The disordered stretch occupies residues 220-240 (LPQHSDAEQSTAPKLGLQLNP).

Ubiquitous.

It localises to the nucleus. Its function is as follows. Probable transcription factor. This Oryza sativa subsp. japonica (Rice) protein is MADS-box transcription factor 27 (MADS27).